We begin with the raw amino-acid sequence, 506 residues long: Dual specificity protein kinase shkC (506 aa).

Residues 1–21 (MDSGLGSSYPEERSGPPEIRP) form a disordered region. Over residues 10–21 (PEERSGPPEIRP) the composition is skewed to basic and acidic residues. The Protein kinase domain occupies 24–284 (INFEELIGTG…IISALDHVII (261 aa)). ATP is bound by residues 30-38 (IGTGSFGKV) and lysine 51. Residue aspartate 147 is the Proton acceptor of the active site. In terms of domain architecture, SH2 spans 396–488 (WFHGDLDTTE…KLDSQLGVPN (93 aa)).

The protein belongs to the protein kinase superfamily. TKL Ser/Thr protein kinase family. SH2 domain-containing protein kinase subfamily.

The protein resides in the membrane. It catalyses the reaction L-seryl-[protein] + ATP = O-phospho-L-seryl-[protein] + ADP + H(+). It carries out the reaction L-threonyl-[protein] + ATP = O-phospho-L-threonyl-[protein] + ADP + H(+). In terms of biological role, required for proper chemotaxis and phagocytosis; proper spatiotemporal control of F-actin levels in chemotaxing cells. Negative regulator of the PI3K (phosphatidylinositol 3 kinase) pathway. Predominantly phosphorylates serines and threonines and tyrosines at a lower level. This chain is Dual specificity protein kinase shkC (shkC), found in Dictyostelium discoideum (Social amoeba).